The primary structure comprises 1099 residues: Carbamoyl phosphate synthase large chain (1099 aa).

The interval 1-402 (MPKREDIKRI…ALGKALRSLE (402 aa)) is carboxyphosphate synthetic domain. Arg129, Arg169, Gly175, Gly176, Glu208, Val210, Glu215, Gly241, Ile242, His243, Gln285, and Glu299 together coordinate ATP. One can recognise an ATP-grasp 1 domain in the interval 133–328 (KETMEKAGLE…IAKVAALLAV (196 aa)). Gln285, Glu299, and Asn301 together coordinate Mg(2+). Mn(2+) contacts are provided by Gln285, Glu299, and Asn301. The interval 403–541 (LDAAPKLDLE…STYNGVENEA (139 aa)) is oligomerization domain. The segment at 542–944 (VPSDREKIMI…AFAKAQIAAG (403 aa)) is carbamoyl phosphate synthetic domain. The ATP-grasp 2 domain occupies 666–857 (AKLLKQIGLK…VARIAAKIMV (192 aa)). ATP-binding residues include Arg702, Lys741, Leu743, Glu748, Gly773, Val774, His775, Ser776, Gln816, and Glu828. Mg(2+)-binding residues include Gln816, Glu828, and Asn830. Positions 816, 828, and 830 each coordinate Mn(2+). Residues 945–1099 (NPLPTTGAIL…VRRLTDTWKM (155 aa)) form the MGS-like domain. Residues 945–1099 (NPLPTTGAIL…VRRLTDTWKM (155 aa)) are allosteric domain.

This sequence belongs to the CarB family. Composed of two chains; the small (or glutamine) chain promotes the hydrolysis of glutamine to ammonia, which is used by the large (or ammonia) chain to synthesize carbamoyl phosphate. Tetramer of heterodimers (alpha,beta)4. Mg(2+) is required as a cofactor. It depends on Mn(2+) as a cofactor.

The catalysed reaction is hydrogencarbonate + L-glutamine + 2 ATP + H2O = carbamoyl phosphate + L-glutamate + 2 ADP + phosphate + 2 H(+). It catalyses the reaction hydrogencarbonate + NH4(+) + 2 ATP = carbamoyl phosphate + 2 ADP + phosphate + 2 H(+). It functions in the pathway amino-acid biosynthesis; L-arginine biosynthesis; carbamoyl phosphate from bicarbonate: step 1/1. The protein operates within pyrimidine metabolism; UMP biosynthesis via de novo pathway; (S)-dihydroorotate from bicarbonate: step 1/3. Its function is as follows. Large subunit of the glutamine-dependent carbamoyl phosphate synthetase (CPSase). CPSase catalyzes the formation of carbamoyl phosphate from the ammonia moiety of glutamine, carbonate, and phosphate donated by ATP, constituting the first step of 2 biosynthetic pathways, one leading to arginine and/or urea and the other to pyrimidine nucleotides. The large subunit (synthetase) binds the substrates ammonia (free or transferred from glutamine from the small subunit), hydrogencarbonate and ATP and carries out an ATP-coupled ligase reaction, activating hydrogencarbonate by forming carboxy phosphate which reacts with ammonia to form carbamoyl phosphate. The polypeptide is Carbamoyl phosphate synthase large chain (Thermotoga sp. (strain RQ2)).